The sequence spans 218 residues: Synaptonemal complex central element protein 2 (218 aa).

Residues 1–32 (MERQGVDVPHVKCKDQEPQPLGESKEHPRWEE) show a composition bias toward basic and acidic residues. The interval 1-42 (MERQGVDVPHVKCKDQEPQPLGESKEHPRWEENCEEEAGGGP) is disordered. The stretch at 61–87 (SSLDSSIDILQKRAQELIENINKSRQK) forms a coiled coil. A disordered region spans residues 171 to 218 (RWGPDHSRGKSPPRPGNSQPPDVFVSSVAETTSQATASEVQTNRDGEC). Residues 198–211 (VAETTSQATASEVQ) show a composition bias toward polar residues.

The protein belongs to the SYCE family. In terms of assembly, homodimer. Found in a complex with SYCP1 and SYCE1. Interacts with SYCP1, SYCE1 and SYCE3. Interacts with TEX12.

It is found in the nucleus. The protein localises to the chromosome. In terms of biological role, major component of the transverse central element of synaptonemal complexes (SCS), formed between homologous chromosomes during meiotic prophase. Requires SYCP1 in order to be incorporated into the central element. May have a role in the synaptonemal complex assembly, stabilization and recombination. This is Synaptonemal complex central element protein 2 (SYCE2) from Homo sapiens (Human).